Consider the following 175-residue polypeptide: Co-chaperone protein HscB homolog (175 aa).

Residues 7 to 79 (SHFDLFHLPA…LKRATYLLHL (73 aa)) enclose the J domain.

Belongs to the HscB family. In terms of assembly, interacts with HscA and stimulates its ATPase activity.

Co-chaperone involved in the maturation of iron-sulfur cluster-containing proteins. Seems to help targeting proteins to be folded toward HscA. The sequence is that of Co-chaperone protein HscB homolog from Burkholderia mallei (strain ATCC 23344).